Reading from the N-terminus, the 289-residue chain is Probable 2-keto-3-deoxyxylonate dehydratase (289 aa).

Mg(2+)-binding residues include E144, E146, and D164.

This sequence belongs to the FAH family.

The catalysed reaction is 2-dehydro-3-deoxy-D-arabinonate = 2,5-dioxopentanoate + H2O. The protein operates within carbohydrate metabolism; D-xylose degradation. In terms of biological role, probable 2-keto-3-deoxyxylonate dehydratase involved in the degradation of D-xylose, a major component of hemicelluloses such as xylan. Catalyzes the fourth reaction in the xylose utilization pathway through dehydratation of 2-dehydro-3-deoxy-D-xylonate into alpha-ketoglutarate semialdehyde (2,5-dioxopentanoate). This Haloferax volcanii (strain ATCC 29605 / DSM 3757 / JCM 8879 / NBRC 14742 / NCIMB 2012 / VKM B-1768 / DS2) (Halobacterium volcanii) protein is Probable 2-keto-3-deoxyxylonate dehydratase.